The chain runs to 362 residues: Type-1 angiotensin II receptor A (362 aa).

At 1-26 the chain is on the extracellular side; the sequence is MSNASTVETSDVERIAVNCSKSGMHN. Residues N3 and N18 are each glycosylated (N-linked (GlcNAc...) asparagine). 2 disulfides stabilise this stretch: C19–C273 and C102–C181. Residues 27-56 traverse the membrane as a helical segment; that stretch reads YIFIAIPIIYSTIFVVGVFGNSMVVIVIYS. Topologically, residues 57–62 are cytoplasmic; it reads YMKMKT. A helical transmembrane segment spans residues 63–90; the sequence is VASIFLMNLALSDLCFVITLPLWAAYTA. At 91 to 99 the chain is on the extracellular side; sequence MHYHWPFGN. The chain crosses the membrane as a helical span at residues 100 to 126; sequence FLCKVASTAITLNLYTTVFLLTCLSID. At 127 to 142 the chain is on the cytoplasmic side; it reads RYSAIVHPMKSRIWRT. A helical transmembrane segment spans residues 143-166; it reads AMVARLTCVGIWLVAFLASMPSII. Over 167 to 191 the chain is Extracellular; the sequence is YRQIYLFHDTNQTVCAIVYDSGHIY. Angiotensin II is bound at residue R168. N-linked (GlcNAc...) asparagine glycosylation is present at N177. Angiotensin II-binding residues include Y185 and K200. The chain crosses the membrane as a helical span at residues 192–217; the sequence is FMVGMSLAKNIVGFLIPFLIILTSYT. Over 218 to 238 the chain is Cytoplasmic; it reads LIGKTLKEVYRAQRARNDDIF. Residues 239 to 267 traverse the membrane as a helical segment; the sequence is KMIVAVVLLFFFCWIPYQVFTFLDVLIQM. The Extracellular portion of the chain corresponds to 268–277; the sequence is DVIQNCKMYD. Residues 278 to 303 traverse the membrane as a helical segment; sequence IVDTGMPITICIAYFNSCLNPFLYGF. Over 304–362 the chain is Cytoplasmic; sequence FGKNFRKHFLQLIKYIPPKMRTHASVNTKSSLVSSSLSDTKRASKKIALQMTDNEEHCK. A lipid anchor (S-palmitoyl cysteine) is attached at C361.

It belongs to the G-protein coupled receptor 1 family. Post-translationally, C-terminal Ser or Thr residues may be phosphorylated. Expressed in lung, liver, kidney, and spleen, with highest expression in the heart.

It localises to the cell membrane. Its function is as follows. Receptor for angiotensin II, a vasoconstricting peptide, which acts as a key regulator of blood pressure and sodium retention by the kidney. The activated receptor in turn couples to G-alpha proteins G(q) (GNAQ, GNA11, GNA14 or GNA15) and thus activates phospholipase C and increases the cytosolic Ca(2+) concentrations, which in turn triggers cellular responses such as stimulation of protein kinase C. The chain is Type-1 angiotensin II receptor A (agtr1-a) from Xenopus laevis (African clawed frog).